A 790-amino-acid chain; its full sequence is Mitochondrial intermediate peptidase (790 aa).

The transit peptide at 1-29 directs the protein to the mitochondrion; sequence MLKRLARNNSSPWICSRCLQQSQRQRRFN. Histidine 570 lines the Zn(2+) pocket. The active site involves glutamate 571. Residues histidine 574 and histidine 577 each coordinate Zn(2+).

Belongs to the peptidase M3 family. It depends on Zn(2+) as a cofactor.

Its subcellular location is the mitochondrion matrix. It catalyses the reaction Release of an N-terminal octapeptide as second stage of processing of some proteins imported into the mitochondrion.. Its function is as follows. Cleaves proteins, imported into the mitochondrion, to their mature size. While most mitochondrial precursor proteins are processed to the mature form in one step by mitochondrial processing peptidase (MPP), the sequential cleavage by MIP of an octapeptide after initial processing by MPP is a required step for a subgroup of nuclear-encoded precursor proteins destined for the matrix or the inner membrane. The sequence is that of Mitochondrial intermediate peptidase (OCT1) from Phaeosphaeria nodorum (strain SN15 / ATCC MYA-4574 / FGSC 10173) (Glume blotch fungus).